We begin with the raw amino-acid sequence, 191 residues long: Calcium and integrin-binding protein 1 (191 aa).

G2 carries the N-myristoyl glycine lipid modification. EF-hand domains are found at residues 103 to 138 (TPDIKSHYAFRIFDFDDDGTLDREDLSQLVNCLTGE) and 148 to 183 (EMKQLIDNILEESDIDRDGTINLSEFQHVISRSPDF). 10 residues coordinate Ca(2+): D116, D118, D120, T122, D127, D161, D163, D165, T167, and E172.

In terms of assembly, monomer. Interacts with the heterodimeric integrin alpha-IIb/beta3 (ITGA2B-ITGB3). Interacts with ITGA2B (via cytoplasmic domain); the interaction is direct and calcium-dependent. Interacts with the protein kinases PLK2/SNK and PRKDC (via the region immediately upstream of the kinase domain). Interacts with PLK3; the interaction inhibits PLK3 kinase activity. Interacts with PSEN2. Interacts (via C-terminus) with F8. Interacts with NBR1 (via C-terminus). Interacts with FEZ1 (via C-terminus). Interacts with UBR5 (via C-terminus); the interaction is sensitive to DNA damage, and may target CIB1 for ubiquitin-mediated degradation. Interacts with IFI6; the interaction is direct. Interacts with BCL2. Interacts with TAS1R2 (via C-terminus); the interaction is independent of the myristoylation state of CIB1. Interacts with ITPR3; the interaction occurs in a calcium dependent manner. Interacts with PTK2/FAK1. Interacts with MAP3K5; the interaction inhibits MAP3K5 activation by phosphorylation, and its subsequent interaction with TRAF2. Interacts (via C-terminal region) with STMN2 (via the N-terminal region); the interaction is direct, occurs in a calcium-dependent manner and attenuates the STMN2-induced neurite outgrowth inhibition. Interacts with SPHK1, the interaction occurs in a calcium-dependent manner. Interacts with ITGA2B (via C-terminal cytoplasmic tail); the interaction occurs upon platelet aggregation and is stabilized/increased in a calcium and magnesium-dependent manner. Interacts with PAK1 (via N-terminal region); the interaction is direct and occurs in a calcium-dependent manner. Interacts with RAC3 (via C-terminal region); the interaction induces their association with the cytoskeleton upon alpha-IIb/beta3 integrin-mediated adhesion. Interacts with ITGA5 and ITGAV. Interacts with MYO1C. Interacts with ITGA2B (via C-terminal cytoplasmic tail region). Interacts (via C-terminal region) with PPP3R1 isoform 1 and isoform 2; the interactions increase upon cardiomyocytes hypertrophy. Interacts with CACNA1C; the interaction increases upon cardiomyocytes hypertrophy. Interacts and forms a complex with TMC6 and TMC8; the interaction stabilizes each component of the complex. As to expression, expressed strongly in Sertoli cells, weakly in pachytene spermatocytes, round spermatids and condensing spermatids (at protein level). Expressed in testis. Expressed in cardiac myocytes and endothelial cells. Expressed in heart, liver, spleen, lung, kidney, brain and inner ear. In the inner ear, expressed in the vestibule, basilar membrane and spiral ganglion cells.

The protein localises to the membrane. It is found in the cell membrane. Its subcellular location is the sarcolemma. The protein resides in the apical cell membrane. It localises to the cell projection. The protein localises to the ruffle membrane. It is found in the filopodium tip. Its subcellular location is the growth cone. The protein resides in the lamellipodium. It localises to the cytoplasm. The protein localises to the cytoskeleton. It is found in the microtubule organizing center. Its subcellular location is the centrosome. The protein resides in the perinuclear region. It localises to the nucleus. The protein localises to the neuron projection. It is found in the perikaryon. Calcium-binding protein that plays a role in the regulation of numerous cellular processes, such as cell differentiation, cell division, cell proliferation, cell migration, thrombosis, angiogenesis, cardiac hypertrophy and apoptosis. Involved in bone marrow megakaryocyte differentiation by negatively regulating thrombopoietin-mediated signaling pathway. Participates in the endomitotic cell cycle of megakaryocyte, a form of mitosis in which both karyokinesis and cytokinesis are interrupted. Plays a role in integrin signaling by negatively regulating alpha-IIb/beta3 activation in thrombin-stimulated megakaryocytes preventing platelet aggregation. Up-regulates PTK2/FAK1 activity, and is also needed for the recruitment of PTK2/FAK1 to focal adhesions; it thus appears to play an important role in focal adhesion formation. Positively regulates cell migration on fibronectin in a CDC42-dependent manner, the effect being negatively regulated by PAK1. Functions as a negative regulator of stress activated MAP kinase (MAPK) signaling pathways. Down-regulates inositol 1,4,5-trisphosphate receptor-dependent calcium signaling. Involved in sphingosine kinase SPHK1 translocation to the plasma membrane in a N-myristoylation-dependent manner preventing TNF-alpha-induced apoptosis. Regulates serine/threonine-protein kinase PLK3 activity for proper completion of cell division progression. Plays a role in microtubule (MT) dynamics during neuronal development; disrupts the MT depolymerization activity of STMN2 attenuating NGF-induced neurite outgrowth and the MT reorganization at the edge of lamellipodia. Promotes cardiomyocyte hypertrophy via activation of the calcineurin/NFAT signaling pathway. Stimulates calcineurin PPP3R1 activity by mediating its anchoring to the sarcolemma. In ischemia-induced (pathological or adaptive) angiogenesis, stimulates endothelial cell proliferation, migration and microvessel formation by activating the PAK1 and ERK1/ERK2 signaling pathway. Also promotes cancer cell survival and proliferation. May regulate cell cycle and differentiation of spermatogenic germ cells, and/or differentiation of supporting Sertoli cells. Forms a complex with TMC6/EVER1 and TMC8/EVER2 in lymphocytes and keratynocytes where CIB1 stabilizes TMC6 and TMC8 levels and reciprocally. The chain is Calcium and integrin-binding protein 1 (Cib1) from Mus musculus (Mouse).